The sequence spans 114 residues: MFTVKLLAFMVVAVSLQHLAEATPKVCAGCPVEVDPNREDIKKSLAHVMAAKNSPDELVRIIKASTQVVNGIKYKVVFEVKNPSTNQVKICKTAYVSRPWEYEGYNVLEFGCKA.

Positions 1–22 are cleaved as a signal peptide; sequence MFTVKLLAFMVVAVSLQHLAEA. Positions 29–83 constitute a Cystatin domain; sequence GCPVEVDPNREDIKKSLAHVMAAKNSPDELVRIIKASTQVVNGIKYKVVFEVKNP.

It belongs to the cystatin family. Expressed by the venom gland (anterior main gland) (at protein level).

The protein localises to the secreted. This chain is Cystatin Pr15a, found in Platymeris rhadamanthus (Red spot assassin bug).